The sequence spans 199 residues: LIM domain-containing protein WLIM2b (199 aa).

LIM zinc-binding domains are found at residues glutamine 8 to glutamate 68 and glutamate 106 to glutamate 166.

In terms of assembly, interacts with F-actin. Expressed in roots, leaves, stems, flowers and siliques. Barely detected in pollen.

The protein localises to the cytoplasm. It is found in the cytoskeleton. Binds to actin filaments and promotes cross-linking into thick bundles. Has an actin-stabilizing activity. The actin regulatory activities are not regulated by pH and [Ca(2+)]. The sequence is that of LIM domain-containing protein WLIM2b from Arabidopsis thaliana (Mouse-ear cress).